Consider the following 84-residue polypeptide: Apoptosis inhibitor Rv3654c (84 aa).

Positions 1-39 (MVARHRAQAAADLASLAAAARLPSGLAAACARATLVARA) are cleaved as a signal peptide.

Interacts with human polypyrimidine tract binding protein-associated splicing factor (PSF).

Its subcellular location is the secreted. It localises to the host cytoplasm. In terms of biological role, effector protein that participates in the suppression of macrophage apoptosis by blocking the extrinsic pathway. Recognizes the host polypyrimidine tract binding protein-associated splicing factor (PSF), which probably leads to its cleavage, diminishing the level of caspase-8 in macrophages. The polypeptide is Apoptosis inhibitor Rv3654c (Mycobacterium tuberculosis (strain ATCC 25618 / H37Rv)).